The chain runs to 561 residues: uncharacterized protein (561 aa).

6 consecutive transmembrane segments (helical) span residues 10 to 29 (LLRN…GYWI), 34 to 56 (FGSL…SQIG), 63 to 80 (LKTV…FQSG), 95 to 117 (VLMA…RMFH), 122 to 144 (LAAG…SSAL), and 164 to 186 (GYAV…ILPW). 2 RCK C-terminal domains span residues 205–287 (QGMA…LLGE) and 294–376 (HDMD…ELGS). Helical transmembrane passes span 386-403 (LVFH…GLIV), 407-429 (GSIP…FGWY), 442-464 (AAST…LQTG), 479-501 (FMLG…RYVL), and 538-560 (SFAI…VVAF).

The protein belongs to the AAE transporter (TC 2.A.81) family.

The protein resides in the cell membrane. This is an uncharacterized protein from Zymomonas mobilis subsp. mobilis (strain ATCC 31821 / ZM4 / CP4).